Reading from the N-terminus, the 588-residue chain is Vesicular glutamate transporter 3 (588 aa).

The Cytoplasmic segment spans residues 1–76 (MPFNAFDTFK…CSCCGIPKRY (76 aa)). The helical transmembrane segment at 77–97 (IIAVMSGLGFCISFGIRCNLG) threads the bilayer. The Vesicular portion of the chain corresponds to 98–130 (VAIVEMVNNSTVYVDGKPEIQTAQFNWDPETVG). Asn-106 carries an N-linked (GlcNAc...) asparagine glycan. A helical transmembrane segment spans residues 131-151 (LIHGSFFWGYIVTQIPGGFIS). At 152 to 153 (NK) the chain is on the cytoplasmic side. The chain crosses the membrane as a helical span at residues 154 to 174 (FAANRVFGAAIFLTSTLNMFI). Residues 175-182 (PSAARVHY) lie on the Vesicular side of the membrane. The chain crosses the membrane as a helical span at residues 183 to 203 (GCVMCVRILQGLVEGVTYPAC). Over 204-221 (HGMWSKWAPPLERSRLAT) the chain is Cytoplasmic. A helical membrane pass occupies residues 222–242 (TSFCGSYAGAVVAMPLAGVLV). Topologically, residues 243-249 (QYIGWAS) are vesicular. The chain crosses the membrane as a helical span at residues 250–270 (VFYIYGMFGIIWYMFWLLQAY). At 271–314 (ECPAVHPTISNEERTYIETSIGEGANLASLSKFNTPWRRFFTSL) the chain is on the cytoplasmic side. The helical transmembrane segment at 315–335 (PVYAIIVANFCRSWTFYLLLI) threads the bilayer. The Vesicular segment spans residues 336 to 353 (SQPAYFEEVFGFAISKVG). Residues 354–374 (LLSAVPHMVMTIVVPIGGQLA) form a helical membrane-spanning segment. Residues 375–390 (DYLRSRKILTTTAVRK) are Cytoplasmic-facing. Residues 391–411 (IMNCGGFGMEATLLLVVGFSH) form a helical membrane-spanning segment. The Vesicular segment spans residues 412–413 (TK). Residues 414–434 (GVAISFLVLAVGFSGFAISGF) traverse the membrane as a helical segment. Topologically, residues 435–447 (NVNHLDIAPRYAS) are cytoplasmic. The helical transmembrane segment at 448–468 (ILMGISNGVGTLSGMVCPLIV) threads the bilayer. Residues 469 to 481 (GAMTKHKTREEWQ) are Vesicular-facing. A helical transmembrane segment spans residues 482 to 502 (NVFLIAALVHYSGVIFYGVFA). Residues 503-585 (SGEKQDWADP…LSYQNEEDFS (83 aa)) are Cytoplasmic-facing. The tract at residues 539-588 (FVSPRKKMSYGATTQNCEVQKTDRRQQRESAFEGEEPLSYQNEEDFSETS) is disordered. Basic and acidic residues predominate over residues 558–569 (QKTDRRQQRESA). Residues 570-588 (FEGEEPLSYQNEEDFSETS) are compositionally biased toward acidic residues.

It belongs to the major facilitator superfamily. Sodium/anion cotransporter family. VGLUT subfamily. Expressed in brain, kidney and liver. Expressed within the amygdala, brainstem, cerberal cortex, dorsal root ganglia, dorsal spinal cord, hippocampus, hypothalamus, retina, striatum and ventral spinal cord. Expressed within neurons of the caudate-putamen, olfactory tubercle, nucleus accumbens, hippocampus, interpeduncular nucleus and dorsal and medial raphe nuclei. Expressed in inner hair cells of the ear. Expressed at synaptic terminals within the lateral superior olive (LSO), a nucleus of the mammalian sound localization system, and in the medial nucleus of the trapezoid body (MNTB), which provides inhibitory input to the LSO.

It localises to the cytoplasmic vesicle. The protein localises to the secretory vesicle. The protein resides in the synaptic vesicle membrane. It is found in the cell membrane. Its subcellular location is the synapse. It localises to the synaptosome. It catalyses the reaction L-glutamate(out) = L-glutamate(in). The catalysed reaction is chloride(in) = chloride(out). It carries out the reaction 3 Na(+)(out) + phosphate(out) = 3 Na(+)(in) + phosphate(in). The L-glutamate uniporter activity exhibits a biphasic dependence on chloride concentration. Chloride channel activity is allosterically activated by lumenal H(+) and Cl(-) leading to synaptic vesicles acidification. The glutamate transport activity is allosterically activated by lumenal H(+) and Cl(-), preventing non-vesicular L-glutamate release. In terms of biological role, multifunctional transporter that transports L-glutamate as well as multiple ions such as chloride, sodium and phosphate. At the synaptic vesicle membrane, mainly functions as an uniporter that mediates the uptake of L-glutamate into synaptic vesicles at presynaptic nerve terminals of excitatory neural cells. The L-glutamate uniporter activity is electrogenic and is driven by the proton electrochemical gradient, mainly by the electrical gradient established by the vacuolar H(+)-ATPase across the synaptic vesicle membrane. In addition, functions as a chloride channel that allows a chloride permeation through the synaptic vesicle membrane that affects the proton electrochemical gradient and promotes synaptic vesicles acidification. At the plasma membrane, following exocytosis, functions as a symporter of Na(+) and phosphate from the extracellular space to the cytoplasm allowing synaptic phosphate homeostasis regulation. The symporter activity is electrogenic. Moreover, operates synergistically with SLC18A3/VACHT under a constant H(+) gradient, thereby allowing striatal vesicular acetylcholine uptake. The sequence is that of Vesicular glutamate transporter 3 from Rattus norvegicus (Rat).